The primary structure comprises 162 residues: Fibroblast growth factor 22 (162 aa).

The signal sequence occupies residues 1 to 22 (MRSRLWLGLAWLLLARAPGAPG).

The protein belongs to the heparin-binding growth factors family. As to quaternary structure, interacts with FGFR1 and FGFR2. Interacts with FGFBP1. As to expression, preferentially expressed in skin; low expression in brain. Expressed in the inner root sheath of the hair follicle.

It localises to the secreted. Plays a role in the fasting response, glucose homeostasis, lipolysis and lipogenesis. Can stimulate cell proliferation (in vitro). May be involved in hair development. This is Fibroblast growth factor 22 (Fgf22) from Mus musculus (Mouse).